A 263-amino-acid polypeptide reads, in one-letter code: MPRPKILLTNDDGINSGGLWAAYDAMSLFADVTVVAPATQQSAVGRSISIFEPLRMNEVTMHGTQAYTVEGRPTDALLLGLYGLGLRPDLVVSGINLGENISFESITTSGTVGAAMEAVNQGVPAIAYSLQMNDEGNKFADPRSHTTDFTQSKDVVTKFTRLFLEKGMPPESKLININIPAEKIEGYKVTVLGERLFETSVEKRIDPRGKPYYWINGTPIYIPEEHSDVTALRKNYVSVTPLSMDNTAFKACPELKKMILDID.

A divalent metal cation contacts are provided by D11, D12, S42, and N96.

This sequence belongs to the SurE nucleotidase family. A divalent metal cation is required as a cofactor.

Its subcellular location is the cytoplasm. It carries out the reaction a ribonucleoside 5'-phosphate + H2O = a ribonucleoside + phosphate. Functionally, nucleotidase that shows phosphatase activity on nucleoside 5'-monophosphates. The sequence is that of 5'-nucleotidase SurE from Methanocorpusculum labreanum (strain ATCC 43576 / DSM 4855 / Z).